The chain runs to 176 residues: MKFLFDLFPIILFFAAFKVWGIFTATAVAIVATLAQVAWVAFRHRKVDTMLWVSLGVIVVFGGATLVLHDEKFIQWKPTVLYWLFAIGLLAARYAFGNNLIEKMMGKQLTLPHPVWDKLNVAWALFFAVLGVANLYVVHNYTESQWVNFKLFGTTGAMVVFIILQSLWLTKYLKDE.

Helical transmembrane passes span 3-23 (FLFD…WGIF), 24-44 (TATA…AFRH), 49-69 (TMLW…LVLH), 81-101 (LYWL…NNLI), 119-139 (LNVA…YVVH), and 149-169 (FKLF…SLWL).

It belongs to the YciB family.

The protein localises to the cell inner membrane. In terms of biological role, plays a role in cell envelope biogenesis, maintenance of cell envelope integrity and membrane homeostasis. The chain is Inner membrane-spanning protein YciB from Burkholderia ambifaria (strain MC40-6).